The following is a 361-amino-acid chain: Hydroxycarboxylate dehydrogenase B (361 aa).

NAD(+) is bound by residues His-48, 122–124 (GRI), 178–182 (LLDYA), His-234, Asn-270, and 313–316 (GEWE).

This sequence belongs to the LDH2/MDH2 oxidoreductase family.

It carries out the reaction 2-hydroxyglutarate + NADP(+) = 2-oxoglutarate + NADPH + H(+). It catalyses the reaction 2-hydroxyglutarate + NAD(+) = 2-oxoglutarate + NADH + H(+). The enzyme catalyses 3-phenyllactate + NADP(+) = 3-phenylpyruvate + NADPH + H(+). The catalysed reaction is 3-phenyllactate + NAD(+) = 3-phenylpyruvate + NADH + H(+). It carries out the reaction (2R)-2-hydroxy-3-(4-hydroxyphenyl)propanoate + NAD(+) = 3-(4-hydroxyphenyl)pyruvate + NADH + H(+). It catalyses the reaction (2R)-2-hydroxy-3-(4-hydroxyphenyl)propanoate + NADP(+) = 3-(4-hydroxyphenyl)pyruvate + NADPH + H(+). The enzyme catalyses (2R)-3-(3,4-dihydroxyphenyl)lactate + NADP(+) = 3-(3,4-dihydroxyphenyl)pyruvate + NADPH + H(+). The catalysed reaction is (2R)-3-(3,4-dihydroxyphenyl)lactate + NAD(+) = 3-(3,4-dihydroxyphenyl)pyruvate + NADH + H(+). In terms of biological role, catalyzes the NAD(P)H-dependent reduction of 2-oxoglutarate, phenylpyruvate and (4-hydroxyphenyl)pyruvate, leading to the respective 2-hydroxycarboxylate in vitro. Shows a preference for NADPH over NADH as a redox partner. Do not catalyze the reverse reactions. This is Hydroxycarboxylate dehydrogenase B from Escherichia coli (strain K12).